We begin with the raw amino-acid sequence, 480 residues long: Aromatic-L-amino-acid decarboxylase (480 aa).

Methionine 1 carries the N-acetylmethionine modification. 2 tandem repeats follow at residues 58–115 and 118–178. The segment at 58 to 178 is 2 X approximate tandem repeats; the sequence is RDIEKIIMPG…AASPELTQAA (121 aa). Threonine 82 contacts substrate. 2 residues coordinate pyridoxal 5'-phosphate: alanine 148 and serine 149. Residue histidine 192 coordinates substrate. Positions 246 and 300 each coordinate pyridoxal 5'-phosphate. Lysine 303 carries the N6-(pyridoxal phosphate)lysine modification.

The protein belongs to the group II decarboxylase family. Homodimer. The cofactor is pyridoxal 5'-phosphate.

It catalyses the reaction L-dopa + H(+) = dopamine + CO2. The catalysed reaction is 5-hydroxy-L-tryptophan + H(+) = serotonin + CO2. Its pathway is catecholamine biosynthesis; dopamine biosynthesis; dopamine from L-tyrosine: step 2/2. Functionally, catalyzes the decarboxylation of L-3,4-dihydroxyphenylalanine (DOPA) to dopamine and L-5-hydroxytryptophan to serotonin. The sequence is that of Aromatic-L-amino-acid decarboxylase from Rattus norvegicus (Rat).